The sequence spans 176 residues: Ribosome maturation factor RimM (176 aa).

The 74-residue stretch at 101–174 (EGHYYIYQLL…EIRVELPPGL (74 aa)) folds into the PRC barrel domain.

This sequence belongs to the RimM family. As to quaternary structure, binds ribosomal protein uS19.

The protein resides in the cytoplasm. Its function is as follows. An accessory protein needed during the final step in the assembly of 30S ribosomal subunit, possibly for assembly of the head region. Essential for efficient processing of 16S rRNA. May be needed both before and after RbfA during the maturation of 16S rRNA. It has affinity for free ribosomal 30S subunits but not for 70S ribosomes. In Moorella thermoacetica (strain ATCC 39073 / JCM 9320), this protein is Ribosome maturation factor RimM.